The following is a 750-amino-acid chain: MTDVQSLDEGVYEATAVLDNGAFGTRTVRFETGRLAKQAAGSVVAYLDDDTMLLSATTASKQPKEHFDFFPLTVDVEERMYAAGRIPGSFFRREGRPSTDAILTCRLIDRPLRPSFVDGLRNEVQVVVTVMSLDPQDPYDVLAINGASASTQLSGLPFSGPVGGTRMALIDGQWVAFPTYEQLERAVFDMVVAGRIVGDDVAIMMVEAEATEKTAGLVSAGAQAPTEEVVAAGLEAAKPFIRTLCQAQQQLAQAAGKATEEFPVFPAYADDAFTAVEQAASAELAEALKIASKQERENRLDEIKAAVLEKVGTGEGEQFEGREKEVGAAFRSLTKKLVRQRIIRDQVRIDGRGLTDIRSLSAEVGVIPRAHGSALFERGETQILGVSTLNMLRLEQTIDSLSPETTKRYMHHYNFPPYSTGETGRVGSPKRREIGHGALAERALIPVLPTREEFPYALRQVSEALGSNGSTSMGSVCASTLSLLNAGVPLKAPVAGIAMGLVSDEIDGKTHYVALTDILGAEDAFGDMDFKVAGTKEFVTALQLDTKLDGIPSEVLAQALGQARDARFTILEVMAEAIGKPDEMSPHAPRVTSISIPVDKIGEVIGPKGKMINSITEETGAEITIEDDGTIYVGAADGPSAEAAIDKINAIANPQLPKVGERFLGTVVKTAAFGAFVSLLPGKDGLVHISKLGNGKRIGKVEDVVNVGDKLRVEIADIDSRGKISLVVVDDEAENADKGGESEETSEQGA.

Residues Asp523 and Asp529 each coordinate Mg(2+). A KH domain is found at 589 to 648 (PRVTSISIPVDKIGEVIGPKGKMINSITEETGAEITIEDDGTIYVGAADGPSAEAAIDKI). The S1 motif domain maps to 660 to 729 (GERFLGTVVK…SRGKISLVVV (70 aa)).

The protein belongs to the polyribonucleotide nucleotidyltransferase family. The cofactor is Mg(2+).

Its subcellular location is the cytoplasm. The catalysed reaction is RNA(n+1) + phosphate = RNA(n) + a ribonucleoside 5'-diphosphate. Involved in mRNA degradation. Catalyzes the phosphorolysis of single-stranded polyribonucleotides processively in the 3'- to 5'-direction. This Saccharopolyspora erythraea (strain ATCC 11635 / DSM 40517 / JCM 4748 / NBRC 13426 / NCIMB 8594 / NRRL 2338) protein is Polyribonucleotide nucleotidyltransferase.